We begin with the raw amino-acid sequence, 192 residues long: Fe/S biogenesis protein NfuA (192 aa).

Cys-149 and Cys-152 together coordinate [4Fe-4S] cluster.

This sequence belongs to the NfuA family. Homodimer. Requires [4Fe-4S] cluster as cofactor.

Involved in iron-sulfur cluster biogenesis. Binds a 4Fe-4S cluster, can transfer this cluster to apoproteins, and thereby intervenes in the maturation of Fe/S proteins. Could also act as a scaffold/chaperone for damaged Fe/S proteins. This Shewanella halifaxensis (strain HAW-EB4) protein is Fe/S biogenesis protein NfuA.